Consider the following 1152-residue polypeptide: Integrin alpha-M (1152 aa).

An N-terminal signal peptide occupies residues 1–16; that stretch reads MALRVLLLTALTLCHG. At 17–1104 the chain is on the extracellular side; that stretch reads FNLDTENAMT…TKVEPFEVPN (1088 aa). FG-GAP repeat units lie at residues 18–75 and 76–135; these read NLDT…SCEP and IRLQ…QQPQ. Cys-66 and Cys-73 form a disulfide bridge. N-linked (GlcNAc...) asparagine glycosylation is present at Asn-86. A disulfide bond links Cys-105 and Cys-123. Positions 150 to 328 constitute a VWFA domain; that stretch reads DIAFLIDGSG…EALKTIQNQL (179 aa). Residue Asn-240 is glycosylated (N-linked (GlcNAc...) asparagine). FG-GAP repeat units follow at residues 339-390, 391-442, 443-503, 506-564, and 569-629; these read QTGS…STFI, NMTR…TGMW, ESNA…RARW, DAVL…SGIS, and QRIA…FNPR. Asn-391 carries an N-linked (GlcNAc...) asparagine glycan. Residues Asp-465, Asp-467, Asn-469, Asp-473, Asp-529, Asn-531, Asp-533, Asp-537, Asp-592, Asp-596, and Asp-600 each contribute to the Ca(2+) site. Residue Asn-469 is glycosylated (N-linked (GlcNAc...) asparagine). Cys-654 and Cys-711 form a disulfide bridge. Residues Asn-692, Asn-696, and Asn-734 are each glycosylated (N-linked (GlcNAc...) asparagine). Cys-770 and Cys-776 are oxidised to a cystine. N-linked (GlcNAc...) asparagine glycosylation is present at Asn-801. Cys-847 and Cys-864 are oxidised to a cystine. N-linked (GlcNAc...) asparagine glycans are attached at residues Asn-880, Asn-900, Asn-911, Asn-940, Asn-946, Asn-978, Asn-993, and Asn-1021. 2 cysteine pairs are disulfide-bonded: Cys-998-Cys-1022 and Cys-1027-Cys-1032. Residues Asn-1044, Asn-1050, and Asn-1075 are each glycosylated (N-linked (GlcNAc...) asparagine). Residues 1105-1128 traverse the membrane as a helical segment; it reads PLPLIVGSSVGGLLLLALITAALY. Residues 1129–1152 lie on the Cytoplasmic side of the membrane; sequence KLGFFKRQYKDMMSEGGPPGAEPQ. Residues 1131–1135 carry the GFFKR motif motif; the sequence is GFFKR.

Belongs to the integrin alpha chain family. In terms of assembly, heterodimer of an alpha and a beta subunit. ITGAM associates with ITGB2. Found in a complex with CD177 and ITGB2/CD18. Interacts with JAM3. Interacts with THBD. Interacts with complement factor H/CFH; this interaction mediates adhesion of neutrophils to pathogens leading to pathogen clearance. Interacts with TMEM268; this interaction inhibits ITGAM degradation via the endosome-lysosome pathway. In terms of tissue distribution, predominantly expressed in monocytes and granulocytes. Expressed in neutrophils (at protein level).

It localises to the cell membrane. It is found in the membrane raft. Its function is as follows. Integrin ITGAM/ITGB2 is implicated in various adhesive interactions of monocytes, macrophages and granulocytes as well as in mediating the uptake of complement-coated particles and pathogens. It is identical with CR-3, the receptor for the iC3b fragment of the third complement component. It probably recognizes the R-G-D peptide in C3b. Integrin ITGAM/ITGB2 is also a receptor for fibrinogen, factor X and ICAM1. It recognizes P1 and P2 peptides of fibrinogen gamma chain. Regulates neutrophil migration. In association with beta subunit ITGB2/CD18, required for CD177-PRTN3-mediated activation of TNF primed neutrophils. May regulate phagocytosis-induced apoptosis in extravasated neutrophils. May play a role in mast cell development. Required with TYROBP/DAP12 in microglia to control production of microglial superoxide ions which promote the neuronal apoptosis that occurs during brain development. This is Integrin alpha-M (ITGAM) from Homo sapiens (Human).